Reading from the N-terminus, the 432-residue chain is Gamma-glutamyl phosphate reductase (432 aa).

The protein belongs to the gamma-glutamyl phosphate reductase family.

It is found in the cytoplasm. It carries out the reaction L-glutamate 5-semialdehyde + phosphate + NADP(+) = L-glutamyl 5-phosphate + NADPH + H(+). It functions in the pathway amino-acid biosynthesis; L-proline biosynthesis; L-glutamate 5-semialdehyde from L-glutamate: step 2/2. Catalyzes the NADPH-dependent reduction of L-glutamate 5-phosphate into L-glutamate 5-semialdehyde and phosphate. The product spontaneously undergoes cyclization to form 1-pyrroline-5-carboxylate. This Corynebacterium glutamicum (strain R) protein is Gamma-glutamyl phosphate reductase.